Reading from the N-terminus, the 398-residue chain is Argininosuccinate synthase (398 aa).

8–16 (AYSGGLDTS) serves as a coordination point for ATP. An L-citrulline-binding site is contributed by Tyr-87. Gly-117 serves as a coordination point for ATP. L-aspartate-binding residues include Thr-119, Asn-123, and Asp-124. Asn-123 lines the L-citrulline pocket. The L-citrulline site is built by Arg-127, Ser-175, Glu-260, and Tyr-272.

It belongs to the argininosuccinate synthase family. Type 1 subfamily. In terms of assembly, homotetramer.

The protein localises to the cytoplasm. The catalysed reaction is L-citrulline + L-aspartate + ATP = 2-(N(omega)-L-arginino)succinate + AMP + diphosphate + H(+). It participates in amino-acid biosynthesis; L-arginine biosynthesis; L-arginine from L-ornithine and carbamoyl phosphate: step 2/3. In Mycobacterium ulcerans (strain Agy99), this protein is Argininosuccinate synthase.